The sequence spans 662 residues: Calcium-dependent protease (662 aa).

One can recognise a Peptidase S8 domain in the interval 196 to 529 (QWHLKQTTIG…YGRINALKAV (334 aa)). Active-site charge relay system residues include D233, H270, and S466. Residues 535–662 (AQPEPVSIFT…IRSLTIELGF (128 aa)) enclose the P/Homo B domain.

This sequence belongs to the peptidase S8 family.

It is found in the cytoplasm. Degrades phycobiliproteins in vitro. Has a substrate specificity similar to that of trypsin. The polypeptide is Calcium-dependent protease (prcA) (Trichormus variabilis (strain ATCC 29413 / PCC 7937) (Anabaena variabilis)).